The primary structure comprises 23 residues: ACVPVYEECGTPKKRCCEERPCK.

2 disulfides stabilise this stretch: cysteine 2-cysteine 17 and cysteine 9-cysteine 22.

Expressed by the venom gland.

Its subcellular location is the secreted. Functionally, antagonist of L-type calcium channels (Cav1/CACNA1). This is U3-ctenitoxin-Co1a from Ctenus ornatus (Brazilian spider).